Consider the following 539-residue polypeptide: Nucleoporin NUP60 (539 aa).

Serine 10, serine 49, serine 81, and serine 89 each carry phosphoserine. The tract at residues 44–80 is disordered; that stretch reads DSARVSPRNNVANKQPRNESFNRRISSMPGGYFHSEI. Residues 91–118 adopt a coiled-coil conformation; it reads VVSAVGEARNDIENKEEEYDETHETNIS. 4 positions are modified to phosphoserine: serine 162, serine 171, serine 214, and serine 222. 2 stretches are compositionally biased toward polar residues: residues 242 to 252 and 258 to 267; these read TANTSAQSIAS and SGVSKSAPSK. Disordered regions lie at residues 242–267, 305–329, and 347–493; these read TANT…APSK, IRKH…TTVK, and NATK…GKHI. The segment covering 347-359 has biased composition (polar residues); sequence NATKISPSAPSKD. Phosphoserine occurs at positions 352, 360, 374, and 382. Polar residues-rich tracts occupy residues 395 to 433 and 448 to 485; these read SAFN…TNLQ and GDST…LSQE. FXF repeat units follow at residues 399-401 and 427-429; these read FSF and FNF. Phosphothreonine is present on threonine 460. The FXF 3 repeat unit spans residues 469–471; sequence FVF. Phosphoserine is present on residues serine 480 and serine 483. One copy of the FXF 4 repeat lies at 509-511; the sequence is FDF.

Component of the nuclear pore complex (NPC). NPC constitutes the exclusive means of nucleocytoplasmic transport. NPCs allow the passive diffusion of ions and small molecules and the active, nuclear transport receptor-mediated bidirectional transport of macromolecules such as proteins, RNAs, ribonucleoparticles (RNPs), and ribosomal subunits across the nuclear envelope. Due to its 8-fold rotational symmetry, all subunits are present with 8 copies or multiples thereof. Binds to NUP1 and NUP2 forming the nuclear basket and the distal ring. The interaction with NUP2 is GSP1-GTP-dependent. Interacts through its FG repeats with karyopherins, such as KAP123 and KAP95-SRP1 (KAP60). Also interacts with GSP1-GTP and SRM1 (PRP20), where NUP60 reduces SRM1 activity, thus inhibiting GSP1 guanine nucleotide dissociation. In terms of processing, phosphorylated by CDC28.

Its subcellular location is the nucleus. It localises to the nuclear pore complex. The protein localises to the nucleus membrane. Functionally, functions as a component of the nuclear pore complex (NPC). NPC components, collectively referred to as nucleoporins (NUPs), can play the role of both NPC structural components and of docking or interaction partners for transiently associated nuclear transport factors. Active directional transport is assured by both, a Phe-Gly (FG) repeat affinity gradient for these transport factors across the NPC and a transport cofactor concentration gradient across the nuclear envelope (GSP1 and GSP2 GTPases associated predominantly with GTP in the nucleus, with GDP in the cytoplasm). This Saccharomyces cerevisiae (strain ATCC 204508 / S288c) (Baker's yeast) protein is Nucleoporin NUP60 (NUP60).